The primary structure comprises 147 residues: Hemoglobin subunit beta (147 aa).

Positions Glu3 to His147 constitute a Globin domain. The heme b site is built by His64 and His93.

This sequence belongs to the globin family. Heterotetramer of two alpha chains and two beta chains. As to expression, red blood cells.

Its function is as follows. Involved in oxygen transport from gills to the various peripheral tissues. In Merlangius merlangus (Whiting), this protein is Hemoglobin subunit beta (hbb).